The sequence spans 66 residues: Large ribosomal subunit protein bL35 (66 aa).

This sequence belongs to the bacterial ribosomal protein bL35 family.

The polypeptide is Large ribosomal subunit protein bL35 (Brucella melitensis biotype 1 (strain ATCC 23456 / CCUG 17765 / NCTC 10094 / 16M)).